We begin with the raw amino-acid sequence, 410 residues long: MTSRPQIHVHDAKEANKQTATKLTLPAVFTAPIRTDIVHKVFTDLNKNRKQASGVKISTRGTAGMGHSAESWGTGRAVARIPRVGGSGTHRSGQAAFGNQCRKGRMFAPLKTYRRVHRRVNVNQKRHAVAAALAASALVPLVFARGHRISNVQELPYVFDDSVESYEKTKQAVAFLKRVGAYDDVLRVAETKALRAGQGKLRNRRYKLRRGPLVVYGNEKSTLTRALRNIPGVDVCNVNRLNLLQLAPGGHVGRFIIWTESAFKKLNEIFGTYSTTGVQKSGYQLQRPLLANADIARIINSNEVQSVVKVAGTTETHERKKNPLTNNNALFKLNPAAKIVKEQAKKAAEASKAKRQATLKANRKAAKTHKKGSQAWIAAFNKANEEAIAKARQEDADFIAQGQEIKEGDE.

This sequence belongs to the universal ribosomal protein uL4 family.

The protein localises to the cytoplasm. In Tetrahymena thermophila (strain SB210), this protein is Large ribosomal subunit protein uL4 (RPL4).